Reading from the N-terminus, the 535-residue chain is Cytochrome P450 4c3 (535 aa).

Heme is bound by residues E342 and C481.

It belongs to the cytochrome P450 family. Heme serves as cofactor.

It localises to the endoplasmic reticulum membrane. Its subcellular location is the microsome membrane. May be involved in the metabolism of insect hormones and in the breakdown of synthetic insecticides. This Drosophila melanogaster (Fruit fly) protein is Cytochrome P450 4c3 (Cyp4c3).